Reading from the N-terminus, the 230-residue chain is UPF0173 metal-dependent hydrolase LI0883 (230 aa).

This sequence belongs to the UPF0173 family.

This is UPF0173 metal-dependent hydrolase LI0883 from Lawsonia intracellularis (strain PHE/MN1-00).